The chain runs to 272 residues: Arylesterase (272 aa).

In terms of domain architecture, AB hydrolase-1 spans 21-253 (KPVLFSHGWL…LKVYKDAPHG (233 aa)). An acetate-binding site is contributed by Trp-29. Residue Ser-95 is part of the active site. Met-96 lines the acetate pocket. Residues Asp-223 and His-252 contribute to the active site.

The protein belongs to the AB hydrolase superfamily. Bacterial non-heme haloperoxidase / perhydrolase family. As to quaternary structure, dimer of trimers.

It carries out the reaction a phenyl acetate + H2O = a phenol + acetate + H(+). The catalysed reaction is peracetic acid + H2O = acetate + H2O2 + H(+). It catalyses the reaction a percarboxylic acid + H2O = a carboxylate + H2O2 + H(+). In terms of biological role, hydrolyzes phenolic esters, such as phenyl acetate, nitrophenyl acetate and naphtyl acetate. Can act on a wide range of esters, but reaction rate and enantioselectivity differ significantly depending on the substrate. Shows a preference for esters with small acyl groups. Also shows low perhydrolase activity, and catalyzes the reversible formation of peroxycarboxylic acids from carboxylic acids and hydrogen peroxide. In vitro, enzyme-generated peracetic acid oxidizes bromide ion to bromonium, which reacts with monochlorodimedone to form bromochlorodimedone. In Pseudomonas fluorescens, this protein is Arylesterase.